Consider the following 353-residue polypeptide: Photosystem II protein D1 (353 aa).

Thr-2 carries the N-acetylthreonine modification. Thr-2 carries the post-translational modification Phosphothreonine. The next 3 helical transmembrane spans lie at 29-46 (YIGW…TATS), 118-133 (HFLL…EWEL), and 142-156 (WIAV…AATA). A chlorophyll a-binding site is contributed by His-118. Tyr-126 is a binding site for pheophytin a. The [CaMn4O5] cluster site is built by Asp-170 and Glu-189. A helical transmembrane segment spans residues 197 to 218 (FHMLGVAGVFGGSLFSAMHGSL). Residue His-198 coordinates chlorophyll a. A quinone-binding positions include His-215 and 264-265 (SF). A Fe cation-binding site is contributed by His-215. Position 272 (His-272) interacts with Fe cation. Residues 274–288 (FLAAWPVIGIWFTSL) form a helical membrane-spanning segment. [CaMn4O5] cluster-binding residues include His-332, Glu-333, Asp-342, and Ala-344. The propeptide occupies 345 to 353 (AVEAPSTIG).

This sequence belongs to the reaction center PufL/M/PsbA/D family. As to quaternary structure, PSII is composed of 1 copy each of membrane proteins PsbA, PsbB, PsbC, PsbD, PsbE, PsbF, PsbH, PsbI, PsbJ, PsbK, PsbL, PsbM, PsbT, PsbX, PsbY, PsbZ, Psb30/Ycf12, at least 3 peripheral proteins of the oxygen-evolving complex and a large number of cofactors. It forms dimeric complexes. The D1/D2 heterodimer binds P680, chlorophylls that are the primary electron donor of PSII, and subsequent electron acceptors. It shares a non-heme iron and each subunit binds pheophytin, quinone, additional chlorophylls, carotenoids and lipids. D1 provides most of the ligands for the Mn4-Ca-O5 cluster of the oxygen-evolving complex (OEC). There is also a Cl(-1) ion associated with D1 and D2, which is required for oxygen evolution. The PSII complex binds additional chlorophylls, carotenoids and specific lipids. serves as cofactor. In terms of processing, tyr-161 forms a radical intermediate that is referred to as redox-active TyrZ, YZ or Y-Z. Post-translationally, C-terminally processed by CTPA; processing is essential to allow assembly of the oxygen-evolving complex and thus photosynthetic growth.

It localises to the plastid. The protein resides in the chloroplast thylakoid membrane. The catalysed reaction is 2 a plastoquinone + 4 hnu + 2 H2O = 2 a plastoquinol + O2. Its function is as follows. Photosystem II (PSII) is a light-driven water:plastoquinone oxidoreductase that uses light energy to abstract electrons from H(2)O, generating O(2) and a proton gradient subsequently used for ATP formation. It consists of a core antenna complex that captures photons, and an electron transfer chain that converts photonic excitation into a charge separation. The D1/D2 (PsbA/PsbD) reaction center heterodimer binds P680, the primary electron donor of PSII as well as several subsequent electron acceptors. In Landoltia punctata (Dotted duckmeat), this protein is Photosystem II protein D1.